The primary structure comprises 752 residues: Multifunctional tryptophan biosynthesis protein (752 aa).

Residues 3 to 202 (FTLLIDNYDS…IQMKGGKWGG (200 aa)) enclose the Glutamine amidotransferase type-1 domain. Residue 58 to 60 (GPG) coordinates L-glutamine. C86 functions as the Nucleophile; for GATase activity in the catalytic mechanism. 136 to 137 (SL) is an L-glutamine binding site. Active-site for GATase activity residues include H176 and E178. The segment at 231-495 (ILNKIHAQRL…DTKAFLRSLI (265 aa)) is indole-3-glycerol phosphate synthase. The N-(5'-phosphoribosyl)anthranilate isomerase stretch occupies residues 509–752 (LVKICGIRST…VEAFVKAVRG (244 aa)).

It carries out the reaction N-(5-phospho-beta-D-ribosyl)anthranilate = 1-(2-carboxyphenylamino)-1-deoxy-D-ribulose 5-phosphate. The catalysed reaction is 1-(2-carboxyphenylamino)-1-deoxy-D-ribulose 5-phosphate + H(+) = (1S,2R)-1-C-(indol-3-yl)glycerol 3-phosphate + CO2 + H2O. The enzyme catalyses chorismate + L-glutamine = anthranilate + pyruvate + L-glutamate + H(+). Its pathway is amino-acid biosynthesis; L-tryptophan biosynthesis; L-tryptophan from chorismate: step 1/5. The protein operates within amino-acid biosynthesis; L-tryptophan biosynthesis; L-tryptophan from chorismate: step 3/5. It participates in amino-acid biosynthesis; L-tryptophan biosynthesis; L-tryptophan from chorismate: step 4/5. In terms of biological role, trifunctional enzyme bearing the Gln amidotransferase (GATase) domain of anthranilate synthase, indole-glycerolphosphate synthase, and phosphoribosylanthranilate isomerase activities. This Cryptococcus neoformans var. grubii serotype A (strain H99 / ATCC 208821 / CBS 10515 / FGSC 9487) (Filobasidiella neoformans var. grubii) protein is Multifunctional tryptophan biosynthesis protein (TRP1).